Here is a 210-residue protein sequence, read N- to C-terminus: Mitochondrial import receptor subunit TOM20-2 (210 aa).

M1 is modified (N-acetylmethionine). At 1–178 (MEFSTADFER…SSKKKKRNTE (178 aa)) the chain is on the cytoplasmic side. 2 TPR repeats span residues 42 to 75 (LLEL…NPGK) and 83 to 120 (ANAY…DPGN). Positions 151 to 161 (GGGGGGGGGGM) are enriched in gly residues. The disordered stretch occupies residues 151-172 (GGGGGGGGGGMASSNVSQSSKK). Residues 179-199 (FTYDVCGWIILACGIVAWVGM) form a helical membrane-spanning segment. Residues 200–210 (AKSLGPPPPAR) lie on the Mitochondrial intermembrane side of the membrane.

Belongs to the Tom20 family. Forms part of the preprotein translocase complex of the outer mitochondrial membrane (TOM complex) which consists of at least 6 different proteins (TOM5, TOM6, TOM7, TOM20, TOM22/TOM9 and TOM40). Component of a mitochondrial large protein complex that contains, at least, MIC60, DGS1, TOM40, TOM20 proteins, and petC/RISP. In terms of processing, the N-terminus is blocked. As to expression, expressed in roots, flowers, young cotyledons and leaves.

It is found in the mitochondrion outer membrane. Its function is as follows. Central component of the receptor complex responsible for the recognition and translocation of cytosolically synthesized mitochondrial preproteins. Together with TOM22 functions as the transit peptide receptor at the surface of the mitochondrion outer membrane and facilitates the movement of preproteins into the translocation pore. The sequence is that of Mitochondrial import receptor subunit TOM20-2 from Arabidopsis thaliana (Mouse-ear cress).